Reading from the N-terminus, the 81-residue chain is Exodeoxyribonuclease 7 small subunit (81 aa).

Belongs to the XseB family. Heterooligomer composed of large and small subunits.

Its subcellular location is the cytoplasm. It catalyses the reaction Exonucleolytic cleavage in either 5'- to 3'- or 3'- to 5'-direction to yield nucleoside 5'-phosphates.. Bidirectionally degrades single-stranded DNA into large acid-insoluble oligonucleotides, which are then degraded further into small acid-soluble oligonucleotides. The polypeptide is Exodeoxyribonuclease 7 small subunit (Paramagnetospirillum magneticum (strain ATCC 700264 / AMB-1) (Magnetospirillum magneticum)).